The following is a 492-amino-acid chain: Cytochrome P450 2L1 (492 aa).

Cys-436 lines the heme pocket.

It belongs to the cytochrome P450 family. It depends on heme as a cofactor.

The protein resides in the endoplasmic reticulum membrane. It is found in the microsome membrane. It catalyses the reaction an organic molecule + reduced [NADPH--hemoprotein reductase] + O2 = an alcohol + oxidized [NADPH--hemoprotein reductase] + H2O + H(+). Its function is as follows. Efficient in catalyzing the monooxygenation of benzphetamine, aminopyrine, benzo(a)pyrene, progesterone, and testosterone. The polypeptide is Cytochrome P450 2L1 (CYP2L1) (Panulirus argus (Caribbean spiny lobster)).